The sequence spans 91 residues: UPF0223 protein SAB0963 (91 aa).

The protein belongs to the UPF0223 family.

In Staphylococcus aureus (strain bovine RF122 / ET3-1), this protein is UPF0223 protein SAB0963.